The sequence spans 79 residues: Ribonuclease P protein component 1 (79 aa).

The protein belongs to the eukaryotic/archaeal RNase P protein component 1 family. In terms of assembly, consists of a catalytic RNA component and at least 4-5 protein subunits.

Its subcellular location is the cytoplasm. It catalyses the reaction Endonucleolytic cleavage of RNA, removing 5'-extranucleotides from tRNA precursor.. Its function is as follows. Part of ribonuclease P, a protein complex that generates mature tRNA molecules by cleaving their 5'-ends. The protein is Ribonuclease P protein component 1 of Saccharolobus solfataricus (strain ATCC 35092 / DSM 1617 / JCM 11322 / P2) (Sulfolobus solfataricus).